Consider the following 416-residue polypeptide: Methylthioribose-1-phosphate isomerase (416 aa).

The active-site Proton donor is D280.

This sequence belongs to the eIF-2B alpha/beta/delta subunits family. MtnA subfamily.

It localises to the cytoplasm. Its subcellular location is the nucleus. It catalyses the reaction 5-(methylsulfanyl)-alpha-D-ribose 1-phosphate = 5-(methylsulfanyl)-D-ribulose 1-phosphate. It functions in the pathway amino-acid biosynthesis; L-methionine biosynthesis via salvage pathway; L-methionine from S-methyl-5-thio-alpha-D-ribose 1-phosphate: step 1/6. Functionally, catalyzes the interconversion of methylthioribose-1-phosphate (MTR-1-P) into methylthioribulose-1-phosphate (MTRu-1-P). The protein is Methylthioribose-1-phosphate isomerase of Candida albicans (strain SC5314 / ATCC MYA-2876) (Yeast).